The sequence spans 667 residues: DNA ligase (667 aa).

Residues 32–36 (DKDYD) and 80–81 (SL) each bind NAD(+). K121 (N6-AMP-lysine intermediate) is an active-site residue. 3 residues coordinate NAD(+): R143, E178, and K314. Zn(2+)-binding residues include C407, C410, C423, and C429. The BRCT domain occupies 587 to 667 (IVESIFKDKT…EFEKMLGRES (81 aa)).

The protein belongs to the NAD-dependent DNA ligase family. LigA subfamily. Requires Mg(2+) as cofactor. It depends on Mn(2+) as a cofactor.

It catalyses the reaction NAD(+) + (deoxyribonucleotide)n-3'-hydroxyl + 5'-phospho-(deoxyribonucleotide)m = (deoxyribonucleotide)n+m + AMP + beta-nicotinamide D-nucleotide.. In terms of biological role, DNA ligase that catalyzes the formation of phosphodiester linkages between 5'-phosphoryl and 3'-hydroxyl groups in double-stranded DNA using NAD as a coenzyme and as the energy source for the reaction. It is essential for DNA replication and repair of damaged DNA. The polypeptide is DNA ligase (Clostridium botulinum (strain Alaska E43 / Type E3)).